Consider the following 65-residue polypeptide: uncharacterized protein (65 aa).

This is an uncharacterized protein from Treponema pallidum (strain Nichols).